Reading from the N-terminus, the 124-residue chain is Holo-[acyl-carrier-protein] synthase (124 aa).

The Mg(2+) site is built by Asp-7 and Glu-55.

The protein belongs to the P-Pant transferase superfamily. AcpS family. Mg(2+) serves as cofactor.

The protein resides in the cytoplasm. The enzyme catalyses apo-[ACP] + CoA = holo-[ACP] + adenosine 3',5'-bisphosphate + H(+). In terms of biological role, transfers the 4'-phosphopantetheine moiety from coenzyme A to a Ser of acyl-carrier-protein. This Borreliella afzelii (strain PKo) (Borrelia afzelii) protein is Holo-[acyl-carrier-protein] synthase.